A 250-amino-acid chain; its full sequence is Mediator of RNA polymerase II transcription subunit 8 (250 aa).

A disordered region spans residues 217-250 (SPMSAVSPGAGPLGKMPSGIKTNIKSANQVHPYR). Over residues 236-250 (IKTNIKSANQVHPYR) the composition is skewed to polar residues.

The protein belongs to the Mediator complex subunit 8 family. As to quaternary structure, component of the Mediator complex.

The protein localises to the nucleus. Functionally, component of the Mediator complex, a coactivator involved in the regulated transcription of nearly all RNA polymerase II-dependent genes. Mediator functions as a bridge to convey information from gene-specific regulatory proteins to the basal RNA polymerase II transcription machinery. Mediator is recruited to promoters by direct interactions with regulatory proteins and serves as a scaffold for the assembly of a functional preinitiation complex with RNA polymerase II and the general transcription factors. This Aedes aegypti (Yellowfever mosquito) protein is Mediator of RNA polymerase II transcription subunit 8 (MED8).